We begin with the raw amino-acid sequence, 1085 residues long: Kinesin-like protein cut7 (1085 aa).

The interval 1–70 (MAPRVAPGGS…TDHALHDENE (70 aa)) is disordered. Positions 24–37 (PVSTPNSHFRSASN) are enriched in polar residues. In terms of domain architecture, Kinesin motor spans 72–421 (NINVVVRVRG…LEYAARAKSI (350 aa)). 159-166 (GQTGTGKT) serves as a coordination point for ATP. Coiled-coil stretches lie at residues 436–604 (LIKD…WNLK), 715–740 (ISSE…LRSL), and 897–955 (LALA…DSIK). 2 consecutive repeats follow at residues 987–998 (DESLCNLETTIE) and 999–1010 (DTSLVKLETTGD). T1011 bears the Phosphothreonine; by CDC2 mark. Positions 1049–1085 (YTSSNQTNEPDVYDKPSNSSRTSLLRSSRSAYSKMKR) are disordered. Residues 1065 to 1078 (SNSSRTSLLRSSRS) are compositionally biased toward low complexity.

This sequence belongs to the TRAFAC class myosin-kinesin ATPase superfamily. Kinesin family. BimC subfamily.

It is found in the cytoplasm. It localises to the cytoskeleton. The protein resides in the microtubule organizing center. The protein localises to the spindle pole body. In terms of biological role, could be a spindle pole body motor. On transition from G2 to M phase of the cell cycle, the spindle pole body duplicates; the daughter pole bodies seed microtubules which interdigitate to form a short spindle that elongates to span the nucleus at metaphase. Mutations at cut7 block spindle formation. The protein is Kinesin-like protein cut7 (cut7) of Schizosaccharomyces pombe (strain 972 / ATCC 24843) (Fission yeast).